We begin with the raw amino-acid sequence, 1225 residues long: uncharacterized protein (1225 aa).

Residues 1-15 are compositionally biased toward polar residues; sequence MSSQAEPSKGASNAD. The interval 1–104 is disordered; that stretch reads MSSQAEPSKG…VDGVPTRPVS (104 aa). The span at 16-25 shows a compositional bias: basic and acidic residues; that stretch reads PNEKVEKMHL. Polar residues predominate over residues 43-65; sequence ASPSDKNNLNPQSAGVSEVQVQD. A helical transmembrane segment spans residues 167–187; the sequence is FLFGYLRFGFLSLFIIMAVCI. The SMP-LTD domain maps to 217 to 422; the sequence is DSETVTWLNT…SPNVYELDIE (206 aa). 3 C2 domains span residues 413-534, 559-668, and 685-803; these read SPNV…NDAF, DSGE…LLWF, and KPAQ…GALM. Ser-843 is modified (phosphoserine). The segment at 867 to 890 is disordered; sequence PESQKTPTAVDNTSTSRGSTSVKT. A compositionally biased stretch (polar residues) spans 869–890; sequence SQKTPTAVDNTSTSRGSTSVKT. The 119-residue stretch at 1019-1137 folds into the C2 4 domain; that stretch reads RLTPVPVKLE…QQQQQTNYEI (119 aa). Positions 1053, 1059, 1107, 1109, and 1115 each coordinate Ca(2+).

Ca(2+) is required as a cofactor.

The protein resides in the endoplasmic reticulum membrane. This is an uncharacterized protein from Schizosaccharomyces pombe (strain 972 / ATCC 24843) (Fission yeast).